The primary structure comprises 288 residues: MQGIIIKGIAGFYYVKVEEEIYECKARGKFRLGELSPIVGDKVDITVINGKGVIEKIHPRTNKLIRPPVSNVTQAFIVFSIVNPEFSSDLLNKFLILCEFNNIKVKVCINKIDLVNEELLTPIKNLLNNTGYELKFLNAKSKIGINELKESLKDNITVVCGPSGVGKSTLMNSIAGSNVMKTGDISEKLKRGKNTTRHSELIEVAGGFIVDTPGFSSLDLNFIDRYELKDLFPEFYEYNGSCKYSTCVHDKEPGCEVKKAVEEGNINIERYNFYVDTLNKLSVRRNYK.

A CP-type G domain is found at 61–218; the sequence is TNKLIRPPVS…IVDTPGFSSL (158 aa). GTP is bound by residues 110–113 and 161–169; these read NKID and GPSGVGKST. Cys-242, Cys-247, His-249, and Cys-255 together coordinate Zn(2+).

The protein belongs to the TRAFAC class YlqF/YawG GTPase family. RsgA subfamily. Monomer. Associates with 30S ribosomal subunit, binds 16S rRNA. Requires Zn(2+) as cofactor.

The protein localises to the cytoplasm. Functionally, one of several proteins that assist in the late maturation steps of the functional core of the 30S ribosomal subunit. Helps release RbfA from mature subunits. May play a role in the assembly of ribosomal proteins into the subunit. Circularly permuted GTPase that catalyzes slow GTP hydrolysis, GTPase activity is stimulated by the 30S ribosomal subunit. This is Small ribosomal subunit biogenesis GTPase RsgA from Clostridium acetobutylicum (strain ATCC 824 / DSM 792 / JCM 1419 / IAM 19013 / LMG 5710 / NBRC 13948 / NRRL B-527 / VKM B-1787 / 2291 / W).